The following is a 57-amino-acid chain: uncharacterized protein (57 aa).

The chain crosses the membrane as a helical span at residues 10 to 27 (FGLLWLIIGSEAFHLNAL). Positions 28–55 (KQDHLERMKQYDAKIRLAKHEFDDTSNE) form a coiled coil.

Its subcellular location is the membrane. This is an uncharacterized protein from Schizosaccharomyces pombe (strain 972 / ATCC 24843) (Fission yeast).